The sequence spans 357 residues: NADH-quinone oxidoreductase subunit H (357 aa).

Helical transmembrane passes span 22-42, 94-114, 130-150, 164-184, 199-219, 254-274, 294-314, and 333-353; these read VAII…LMLV, IYLF…VWAV, LLYV…AGWA, AALL…VVMI, GGII…FFIS, FFLA…IMFF, IPGM…YLWV, and VFLP…QLQL.

Belongs to the complex I subunit 1 family. In terms of assembly, NDH-1 is composed of 14 different subunits. Subunits NuoA, H, J, K, L, M, N constitute the membrane sector of the complex.

It localises to the cell inner membrane. The enzyme catalyses a quinone + NADH + 5 H(+)(in) = a quinol + NAD(+) + 4 H(+)(out). Functionally, NDH-1 shuttles electrons from NADH, via FMN and iron-sulfur (Fe-S) centers, to quinones in the respiratory chain. The immediate electron acceptor for the enzyme in this species is believed to be ubiquinone. Couples the redox reaction to proton translocation (for every two electrons transferred, four hydrogen ions are translocated across the cytoplasmic membrane), and thus conserves the redox energy in a proton gradient. This subunit may bind ubiquinone. The polypeptide is NADH-quinone oxidoreductase subunit H (Vesicomyosocius okutanii subsp. Calyptogena okutanii (strain HA)).